The chain runs to 212 residues: Interleukin-6 (212 aa).

Positions 1–27 are cleaved as a signal peptide; that stretch reads MNSFSTSAFGPVAFSLGLLLVLPAAFP. Residues cysteine 72 and cysteine 78 are joined by a disulfide bond. Asparagine 73 carries an N-linked (GlcNAc...) asparagine glycan. Serine 81 is modified (phosphoserine). Cysteines 101 and 111 form a disulfide. Asparagine 172 carries an N-linked (GlcNAc...) asparagine glycan.

Belongs to the IL-6 superfamily. Component of a hexamer of two molecules each of IL6, IL6R and IL6ST; first binds to IL6R to associate with the signaling subunit IL6ST. Interacts with IL6R (via the N-terminal ectodomain); this interaction may be affected by IL6R-binding with SORL1, hence decreasing IL6 cis signaling. Interacts with SORL1 (via the N-terminal ectodomain); this interaction leads to IL6 internalization and lysosomal degradation. May form a trimeric complex with the soluble SORL1 ectodomain and soluble IL6R receptor; this interaction might stabilize circulating IL6, hence promoting IL6 trans signaling.

The protein localises to the secreted. Cytokine with a wide variety of biological functions in immunity, tissue regeneration, and metabolism. Binds to IL6R, then the complex associates to the signaling subunit IL6ST/gp130 to trigger the intracellular IL6-signaling pathway. The interaction with the membrane-bound IL6R and IL6ST stimulates 'classic signaling', whereas the binding of IL6 and soluble IL6R to IL6ST stimulates 'trans-signaling'. Alternatively, 'cluster signaling' occurs when membrane-bound IL6:IL6R complexes on transmitter cells activate IL6ST receptors on neighboring receiver cells. Its function is as follows. IL6 is a potent inducer of the acute phase response. Rapid production of IL6 contributes to host defense during infection and tissue injury, but excessive IL6 synthesis is involved in disease pathology. In the innate immune response, is synthesized by myeloid cells, such as macrophages and dendritic cells, upon recognition of pathogens through toll-like receptors (TLRs) at the site of infection or tissue injury. In the adaptive immune response, is required for the differentiation of B cells into immunoglobulin-secreting cells. Plays a major role in the differentiation of CD4(+) T cell subsets. Essential factor for the development of T follicular helper (Tfh) cells that are required for the induction of germinal-center formation. Required to drive naive CD4(+) T cells to the Th17 lineage. Also required for proliferation of myeloma cells and the survival of plasmablast cells. In terms of biological role, acts as an essential factor in bone homeostasis and on vessels directly or indirectly by induction of VEGF, resulting in increased angiogenesis activity and vascular permeability. Induces, through 'trans-signaling' and synergistically with IL1B and TNF, the production of VEGF. Involved in metabolic controls, is discharged into the bloodstream after muscle contraction increasing lipolysis and improving insulin resistance. 'Trans-signaling' in central nervous system also regulates energy and glucose homeostasis. Mediates, through GLP-1, crosstalk between insulin-sensitive tissues, intestinal L cells and pancreatic islets to adapt to changes in insulin demand. Also acts as a myokine. Plays a protective role during liver injury, being required for maintenance of tissue regeneration. Also has a pivotal role in iron metabolism by regulating HAMP/hepcidin expression upon inflammation or bacterial infection. Through activation of IL6ST-YAP-NOTCH pathway, induces inflammation-induced epithelial regeneration. This Macaca mulatta (Rhesus macaque) protein is Interleukin-6 (IL6).